We begin with the raw amino-acid sequence, 203 residues long: dITP/XTP pyrophosphatase (203 aa).

8–13 serves as a coordination point for substrate; it reads TANKGK. Mg(2+) contacts are provided by Glu41 and Asp70. Catalysis depends on Asp70, which acts as the Proton acceptor. Residues Ser71, 153 to 156, Lys176, and 181 to 182 contribute to the substrate site; these read FGYD and HR.

Belongs to the HAM1 NTPase family. Homodimer. Mg(2+) serves as cofactor.

The catalysed reaction is XTP + H2O = XMP + diphosphate + H(+). It catalyses the reaction dITP + H2O = dIMP + diphosphate + H(+). The enzyme catalyses ITP + H2O = IMP + diphosphate + H(+). Pyrophosphatase that catalyzes the hydrolysis of nucleoside triphosphates to their monophosphate derivatives, with a high preference for the non-canonical purine nucleotides XTP (xanthosine triphosphate), dITP (deoxyinosine triphosphate) and ITP. Seems to function as a house-cleaning enzyme that removes non-canonical purine nucleotides from the nucleotide pool, thus preventing their incorporation into DNA/RNA and avoiding chromosomal lesions. This Listeria monocytogenes serotype 4b (strain F2365) protein is dITP/XTP pyrophosphatase.